A 245-amino-acid chain; its full sequence is Thiopurine S-methyltransferase (245 aa).

29–40 lines the S-adenosyl-L-methionine pocket; sequence WREKWVDGKIGF. Phenylalanine 40 serves as a coordination point for substrate. Lysine 58 is subject to N6-acetyllysine. S-adenosyl-L-methionine is bound by residues leucine 69, glutamate 90, and arginine 152.

Belongs to the class I-like SAM-binding methyltransferase superfamily. TPMT family. In terms of assembly, monomer.

It localises to the cytoplasm. It catalyses the reaction S-adenosyl-L-methionine + a thiopurine = S-adenosyl-L-homocysteine + a thiopurine S-methylether.. This is Thiopurine S-methyltransferase (TPMT) from Panthera leo (Lion).